The primary structure comprises 1073 residues: Carbamoyl phosphate synthase large chain (1073 aa).

The carboxyphosphate synthetic domain stretch occupies residues P2 to E403. 12 residues coordinate ATP: R129, R169, G175, G176, E208, L210, E215, G241, I242, H243, Q285, and E299. The ATP-grasp 1 domain occupies D133–V328. 3 residues coordinate Mg(2+): Q285, E299, and N301. Mn(2+)-binding residues include Q285, E299, and N301. The interval V404–A553 is oligomerization domain. Residues N554–N936 form a carbamoyl phosphate synthetic domain region. The 192-residue stretch at Q679–A870 folds into the ATP-grasp 2 domain. R715, H754, L756, E761, G786, V787, H788, S789, Q829, and E841 together coordinate ATP. Residues Q829, E841, and N843 each contribute to the Mg(2+) site. Mn(2+) contacts are provided by Q829, E841, and N843. Residues S937–K1073 form the MGS-like domain. Residues S937 to K1073 form an allosteric domain region.

It belongs to the CarB family. Composed of two chains; the small (or glutamine) chain promotes the hydrolysis of glutamine to ammonia, which is used by the large (or ammonia) chain to synthesize carbamoyl phosphate. Tetramer of heterodimers (alpha,beta)4. The cofactor is Mg(2+). Mn(2+) serves as cofactor.

The enzyme catalyses hydrogencarbonate + L-glutamine + 2 ATP + H2O = carbamoyl phosphate + L-glutamate + 2 ADP + phosphate + 2 H(+). The catalysed reaction is hydrogencarbonate + NH4(+) + 2 ATP = carbamoyl phosphate + 2 ADP + phosphate + 2 H(+). It functions in the pathway amino-acid biosynthesis; L-arginine biosynthesis; carbamoyl phosphate from bicarbonate: step 1/1. Its pathway is pyrimidine metabolism; UMP biosynthesis via de novo pathway; (S)-dihydroorotate from bicarbonate: step 1/3. Large subunit of the glutamine-dependent carbamoyl phosphate synthetase (CPSase). CPSase catalyzes the formation of carbamoyl phosphate from the ammonia moiety of glutamine, carbonate, and phosphate donated by ATP, constituting the first step of 2 biosynthetic pathways, one leading to arginine and/or urea and the other to pyrimidine nucleotides. The large subunit (synthetase) binds the substrates ammonia (free or transferred from glutamine from the small subunit), hydrogencarbonate and ATP and carries out an ATP-coupled ligase reaction, activating hydrogencarbonate by forming carboxy phosphate which reacts with ammonia to form carbamoyl phosphate. The chain is Carbamoyl phosphate synthase large chain from Escherichia coli O157:H7.